The following is a 132-amino-acid chain: Small ribosomal subunit protein uS8 (132 aa).

The protein belongs to the universal ribosomal protein uS8 family. In terms of assembly, part of the 30S ribosomal subunit. Contacts proteins S5 and S12.

Its function is as follows. One of the primary rRNA binding proteins, it binds directly to 16S rRNA central domain where it helps coordinate assembly of the platform of the 30S subunit. The chain is Small ribosomal subunit protein uS8 from Streptococcus equi subsp. equi (strain 4047).